We begin with the raw amino-acid sequence, 186 residues long: Elongation factor P (186 aa).

The protein belongs to the elongation factor P family.

Its subcellular location is the cytoplasm. It functions in the pathway protein biosynthesis; polypeptide chain elongation. Functionally, involved in peptide bond synthesis. Stimulates efficient translation and peptide-bond synthesis on native or reconstituted 70S ribosomes in vitro. Probably functions indirectly by altering the affinity of the ribosome for aminoacyl-tRNA, thus increasing their reactivity as acceptors for peptidyl transferase. This Pelagibacter ubique (strain HTCC1062) protein is Elongation factor P.